The sequence spans 251 residues: Fibroblast growth factor 23 (251 aa).

The first 24 residues, 1 to 24 (MLGARLRLWVCALCSVCSMSVLRA), serve as a signal peptide directing secretion. Residues Cys-95 and Cys-113 are joined by a disulfide bond. 2 O-linked (GalNAc) threonine glycosylation sites follow: Thr-171 and Thr-178. Residues 172–221 (PIPRRHTRSAEDDSERDPLNVLKPRARMTPAPASCSQELPSAEDNSPMAS) are disordered. Ser-180 carries the post-translational modification Phosphoserine; by FAM20C. Over residues 205-219 (SCSQELPSAEDNSPM) the composition is skewed to polar residues.

The protein belongs to the heparin-binding growth factors family. In terms of assembly, interacts with FGFR1, FGFR2, FGFR3 and FGFR4. Affinity between fibroblast growth factors (FGFs) and their receptors is increased by KL and heparan sulfate glycosaminoglycans that function as coreceptors. Following secretion this protein is inactivated by cleavage into a N-terminal fragment and a C-terminal fragment. The processing is effected by proprotein convertases. In terms of processing, O-glycosylated at Thr-171 and Thr-178 by GALNT3 and glycosylation of Thr-178 requires previous glycosylation at Thr171. Glycosylation is necessary for secretion; it blocks processing by proprotein convertases when the O-glycan is alpha 2,6-sialylated. Competition between proprotein convertase cleavage and block of cleavage by O-glycosylation determines the level of secreted active FGF23. Post-translationally, phosphorylation at Ser-180 mediated by FAM20C slows down glycosylation at Thr-178 notably. In terms of tissue distribution, expressed in osteogenic cells particularly during phases of active bone remodeling. In adult trabecular bone, expressed in osteocytes and flattened bone-lining cells (inactive osteoblasts).

Its subcellular location is the secreted. In terms of biological role, regulator of phosphate homeostasis. Inhibits renal tubular phosphate transport by reducing SLC34A1 levels. Up-regulates EGR1 expression in the presence of KL. Acts directly on the parathyroid to decrease PTH secretion. Regulator of vitamin-D metabolism. Negatively regulates osteoblast differentiation and matrix mineralization. This is Fibroblast growth factor 23 (FGF23) from Homo sapiens (Human).